Consider the following 197-residue polypeptide: Small ribosomal subunit protein uS4A (197 aa).

In terms of domain architecture, S4 RNA-binding spans 107-181 (RRLQTQVYKL…VARRNAARKA (75 aa)). The interval 160–197 (PTSPFGGARPGRVARRNAARKAEASGEAADEADEADEE) is disordered. A Glycyl lysine isopeptide (Lys-Gly) (interchain with G-Cter in ubiquitin) cross-link involves residue lysine 180. Position 184 is a phosphoserine (serine 184). Positions 187–197 (AADEADEADEE) are enriched in acidic residues.

This sequence belongs to the universal ribosomal protein uS4 family. In terms of assembly, component of the small ribosomal subunit (SSU). Mature yeast ribosomes consist of a small (40S) and a large (60S) subunit. The 40S small subunit contains 1 molecule of ribosomal RNA (18S rRNA) and 33 different proteins (encoded by 57 genes). The large 60S subunit contains 3 rRNA molecules (25S, 5.8S and 5S rRNA) and 46 different proteins (encoded by 81 genes). Interacts with snoRNA U3. uS11 interacts with MPP10. Component of the ribosomal small subunit (SSU) processome composed of at least 40 protein subunits and snoRNA U3.

The protein localises to the cytoplasm. It is found in the nucleus. Its subcellular location is the nucleolus. Functionally, component of the ribosome, a large ribonucleoprotein complex responsible for the synthesis of proteins in the cell. The small ribosomal subunit (SSU) binds messenger RNAs (mRNAs) and translates the encoded message by selecting cognate aminoacyl-transfer RNA (tRNA) molecules. The large subunit (LSU) contains the ribosomal catalytic site termed the peptidyl transferase center (PTC), which catalyzes the formation of peptide bonds, thereby polymerizing the amino acids delivered by tRNAs into a polypeptide chain. The nascent polypeptides leave the ribosome through a tunnel in the LSU and interact with protein factors that function in enzymatic processing, targeting, and the membrane insertion of nascent chains at the exit of the ribosomal tunnel. uS4 is involved in nucleolar processing of pre-18S ribosomal RNA and ribosome assembly. In Saccharomyces cerevisiae (strain ATCC 204508 / S288c) (Baker's yeast), this protein is Small ribosomal subunit protein uS4A.